Reading from the N-terminus, the 429-residue chain is Prenyltransferase okaC (429 aa).

Dimethylallyl diphosphate is bound by residues Arg-101, Lys-189, Tyr-191, Lys-257, Tyr-259, Tyr-342, Tyr-406, and Tyr-410.

It belongs to the tryptophan dimethylallyltransferase family.

The enzyme catalyses cyclo(L-Trp-L-Trp) + 2 dimethylallyl diphosphate = cyclo(N(8)-(alpha,alpha-dimethylallyl)-L-Trp-6a-(alpha,alpha-dimethylallyl)-L-Trp) + 2 diphosphate. It functions in the pathway alkaloid biosynthesis. Its function is as follows. Prenyltransferase; part of the gene cluster that mediates the biosynthesis of okaramine B, a prenylated indole alkaloid that possesses an unusual octacyclic ring system, including a four-membered azetidine ring and an eight-membered azocine ring, and that exhibits insecticidal activity against silkworm larvae. Within the pathway, okaC performs asymmetric reverse prenylation of cyclo(L-Trp-L-Trp) at N-1 and C-2' of the indole ring to produce the cyclic prenylated tryptophan dimer cyclo(N8-(alpha,alpha-dimethylallyl)-L-Trp-6a-(alpha,alpha-dime-thylallyl)-L-Trp). The biosynthesis begins with the NRPS okaA that condenses two tryptophan molecules into cyclo(L-Trp-L-Trp). Prenylation by the prenyltransferase okaC then leads to the formation of cyclo(N8-(alpha,alpha-dimethylallyl)-L-Trp-6a-(alpha,alpha-dime-thylallyl)-L-Trp). This is followed by indole 2,3-epoxidation by the FAD-dependent monooxygenase okaB to facilitate the formation of the hexahydropyrrolo[2,3-b]indole (HPI) moiety of okaramine C. The cytochrome P450 monooxygenase okaD then likely catalyzes formation of the eight-membered ring of okaramine A. The dioxygenase okaE further forms the unusual 2-dimethyl-3-methyl-azetidine ring to yield 12-deshydroxyl okaramine E, as well as the hydroxylation of 12-deshydroxyl okaramine E to produce okaramine E. The cytochrome P450 monoxygenase okaG converts 12-deshydroxyl okaramine E into 3-desmethyl okaramine B which is further methylated by the methyltransferase okaF into okaramine B. In a shunt pathway, okaG and okaF together are also able to convert okaramine E into okaramine D. Okaramine H is produced by nonenzymatic conversion from okaramine A. The protein is Prenyltransferase okaC of Penicillium ochrochloron.